A 429-amino-acid polypeptide reads, in one-letter code: MSNTDAFFSRPLAEVDPDIFGAIEKELGRQRHEIELIASENIVSRAVLEAQGSIMTNKYAEGYPGKRYYGGCQFVDIAEELAIERAKKLFGVNFANVQPNSGSQMNQAVFLALLQPGDTFMGLDLNSGGHLTHGSPVNMSGKWFNVVSYGVREGDNLLDMDEVERKAKETRPKLILAGGTAYSRVWDWKRFREIADEVGAYLMVDMAHIAGLVAGGQHPSPFPHCHVATTTTHKSLRGPRGGMILTNDEDLAKKFNSAVFPGLQGGPLMHVIAAKAVAFGEALQPEFKDYAAQVVKNAKALAETLIEGGLDVVSGGTDNHLMLVDLRKKNATGKRAEAALGRAYITCNKNGIPFDPEKPFVTSGVRLGTPAGTTRGFKEAEFREIGKLIVEVLDGLKVANSDEGNASVEAAVREKVVGLTDRFPMYPYM.

Residues L125 and G129 to L131 contribute to the (6S)-5,6,7,8-tetrahydrofolate site. K234 is modified (N6-(pyridoxal phosphate)lysine).

This sequence belongs to the SHMT family. In terms of assembly, homodimer. Requires pyridoxal 5'-phosphate as cofactor.

It is found in the cytoplasm. The catalysed reaction is (6R)-5,10-methylene-5,6,7,8-tetrahydrofolate + glycine + H2O = (6S)-5,6,7,8-tetrahydrofolate + L-serine. It functions in the pathway one-carbon metabolism; tetrahydrofolate interconversion. It participates in amino-acid biosynthesis; glycine biosynthesis; glycine from L-serine: step 1/1. Catalyzes the reversible interconversion of serine and glycine with tetrahydrofolate (THF) serving as the one-carbon carrier. This reaction serves as the major source of one-carbon groups required for the biosynthesis of purines, thymidylate, methionine, and other important biomolecules. Also exhibits THF-independent aldolase activity toward beta-hydroxyamino acids, producing glycine and aldehydes, via a retro-aldol mechanism. This is Serine hydroxymethyltransferase 1 from Agrobacterium fabrum (strain C58 / ATCC 33970) (Agrobacterium tumefaciens (strain C58)).